Here is a 615-residue protein sequence, read N- to C-terminus: MKSTDPIKIAVLPGDGIGIEVTEATLPVFEVLDVPVILNYGDIGWEFWKKEGAAIPSRTWQLIASSDTVLLGAITSKPQREAKQELSNALKKSNPYYVSPVIQLRQGLDLFANVRPCFSIDDQSKPFNFCIIRENSEGLYCGFDYFPLPKAIHSLLAESQHWQTIPADEASCALRLQSKSGLTRLFDFAFKHAMQTGMPRVTLADKPNVLRESGEFTRKIFESTAQRYPKIQADILNVDAVALWLIKSPEKFGVIVAENMFGDILSDVGAGVMGGLGLAPSANIGDKGSYFEPVHGSGPRIRKNCANPSAMFLTISMLLNHFGYPDRAKKIVNAVMQVIKEKRFITYDLGGHATTTDMANAVIEHCARLNASCLSKDFNPTPKENLIESDTMPNLLQQLINCNSAEISDALDACGIEGGLLSIKPLSQGMKIIGPAYTIQYLPREKKGTAFHNAANYIDKVPKHSVIVIDNNGQIDCTVWGDLLTHTALRNNIMGTVVHGAVRDVESIRSTNYPVFCTGIYMCSGKNRVYKANEQCPLSINGVTINPGDIIFADDNGVLVIPNDRLQEVVNKTIAIRLTEERIKTAIASGSTLEQAREDYCYEQPWLGINKKRES.

It belongs to the isocitrate and isopropylmalate dehydrogenases family. This sequence to M.jannaschii MJ0644 in the C-terminal section.

This is Protein DlpA (dlpA) from Legionella pneumophila subsp. pneumophila (strain Philadelphia 1 / ATCC 33152 / DSM 7513).